The following is a 114-amino-acid chain: Tyrosine-protein phosphatase 27 (114 aa).

In terms of domain architecture, Tyrosine-protein phosphatase spans 1-114 (WQMIVEHKCC…ELGNDNPIVV (114 aa)). Substrate is bound at residue Asp82.

Belongs to the protein-tyrosine phosphatase family.

It carries out the reaction O-phospho-L-tyrosyl-[protein] + H2O = L-tyrosyl-[protein] + phosphate. This Styela plicata (Wrinkled sea squirt) protein is Tyrosine-protein phosphatase 27 (STY-27).